A 142-amino-acid polypeptide reads, in one-letter code: Alpha-lactalbumin (142 aa).

The signal sequence occupies residues 1–19 (MMSFVSLLLVGILFHATQA). Residues 20 to 142 (EQLTKCEVFR…KLDQWLCEKL (123 aa)) form the C-type lysozyme domain. Cystine bridges form between cysteine 25–cysteine 139, cysteine 47–cysteine 130, cysteine 80–cysteine 96, and cysteine 92–cysteine 110. Residues asparagine 64 and asparagine 93 are each glycosylated (N-linked (GlcNAc...) asparagine). Ca(2+)-binding residues include lysine 98, aspartate 101, aspartate 103, aspartate 106, and aspartate 107.

Belongs to the glycosyl hydrolase 22 family. Lactose synthase (LS) is a heterodimer of a catalytic component, beta1,4-galactosyltransferase (beta4Gal-T1) and a regulatory component, alpha-lactalbumin (LA). Mammary gland specific. Secreted in milk.

The protein resides in the secreted. Its function is as follows. Regulatory subunit of lactose synthase, changes the substrate specificity of galactosyltransferase in the mammary gland making glucose a good acceptor substrate for this enzyme. This enables LS to synthesize lactose, the major carbohydrate component of milk. In other tissues, galactosyltransferase transfers galactose onto the N-acetylglucosamine of the oligosaccharide chains in glycoproteins. The chain is Alpha-lactalbumin (LALBA) from Bos mutus grunniens (Wild yak).